The primary structure comprises 1011 residues: Multiple C2 domain and transmembrane region protein 7 (1011 aa).

Positions 1-110 constitute a C2 1 domain; the sequence is MMMSNLKLGV…PHSDAVVLHF (110 aa). The span at 178–195 shows a compositional bias: polar residues; the sequence is QEHQHQHPQGPNQSSSLA. Residues 178 to 201 form a disordered region; the sequence is QEHQHQHPQGPNQSSSLAAEQDNH. C2 domains are found at residues 261–381, 421–546, and 587–709; these read IHKD…PQWY, VDCS…ARWY, and YSSD…THSY. Residues D294, D300, D347, D349, and D354 each coordinate Ca(2+). 3 consecutive transmembrane segments (helical) span residues 812 to 832, 846 to 866, and 954 to 974; these read MMTV…ICSW, LMLV…MFLI, and IFVI…IQIV.

This sequence belongs to the MCTP family. It depends on Ca(2+) as a cofactor. As to expression, accumulates specifically in hydathodes. Restricted the basal meristem of roots. Observed in flowers.

Its subcellular location is the membrane. The protein resides in the vesicle. It localises to the endosome membrane. Its function is as follows. May function as a signaling molecule by regulating the trafficking of other regulators. The protein is Multiple C2 domain and transmembrane region protein 7 of Arabidopsis thaliana (Mouse-ear cress).